The chain runs to 262 residues: MNRIDKKFEVLKGEGRKALITFITAGDPDIETTYDIVLAIEEVGADIIELGIPYSDPLADGPTIQASSQRALNKGVKIPDIMRIVEKIRFKSDIPLVYLVYYNSIFKYGIQKFLKESKDVGIDGLIIPDLPLEERKDILEEADKYGIYLIPLVAPTSKERIKLITENGKGFVYCVSITGVTGAREDIETDIEEYMKTVSQYTNMPKAIGFGISTPEMAKKLKDFSDGIIVGSALVERIAKGYNKSEMLQEVKSFVSILKEVL.

Residues Glu-49 and Asp-60 each act as proton acceptor in the active site.

It belongs to the TrpA family. As to quaternary structure, tetramer of two alpha and two beta chains.

It carries out the reaction (1S,2R)-1-C-(indol-3-yl)glycerol 3-phosphate + L-serine = D-glyceraldehyde 3-phosphate + L-tryptophan + H2O. The protein operates within amino-acid biosynthesis; L-tryptophan biosynthesis; L-tryptophan from chorismate: step 5/5. The alpha subunit is responsible for the aldol cleavage of indoleglycerol phosphate to indole and glyceraldehyde 3-phosphate. This chain is Tryptophan synthase alpha chain, found in Thermoanaerobacter pseudethanolicus (strain ATCC 33223 / 39E) (Clostridium thermohydrosulfuricum).